The primary structure comprises 456 residues: Gamma-aminobutyric acid receptor subunit alpha-1 (456 aa).

Positions 1–27 (MKKSPGLSDYLWAWTLFLSTLTGRSYG) are cleaved as a signal peptide. Topologically, residues 28–253 (QPSLQDELKD…FHLKRKIGYF (226 aa)) are extracellular. Asn38 is a glycosylation site (N-linked (GlcNAc...) asparagine). Arg94 contributes to the 4-aminobutanoate binding site. Residue Asn138 is glycosylated (N-linked (GlcNAc...) asparagine). Thr157 serves as a coordination point for 4-aminobutanoate. A disulfide bridge links Cys166 with Cys180. A helical transmembrane segment spans residues 254–274 (VIQTYLPCIMTVILSQVSFWL). Over 275-279 (NRESV) the chain is Cytoplasmic. A helical membrane pass occupies residues 280-301 (PARTVFGVTTVLTMTTLSISAR). Residues 302–311 (NSLPKVAYAT) lie on the Extracellular side of the membrane. Residues 312 to 333 (AMDWFIAVCYAFVFSALIEFAT) traverse the membrane as a helical segment. The Cytoplasmic segment spans residues 334–421 (VNYFTKRGYA…TFNSVSKIDR (88 aa)). Residues 422–441 (LSRIAFPLLFGIFNLVYWAT) form a helical membrane-spanning segment. The Extracellular segment spans residues 442 to 456 (YLNREPQLKAPTPHQ).

The protein belongs to the ligand-gated ion channel (TC 1.A.9) family. Gamma-aminobutyric acid receptor (TC 1.A.9.5) subfamily. GABRA1 sub-subfamily. As to quaternary structure, heteropentamer, formed by a combination of alpha (GABRA1-6), beta (GABRB1-3), gamma (GABRG1-3), delta (GABRD), epsilon (GABRE), rho (GABRR1-3), pi (GABRP) and theta (GABRQ) subunits, each subunit exhibiting distinct physiological and pharmacological properties. Interacts with UBQLN1. Interacts with TRAK1. Interacts with KIF21B. Identified in a complex of 720 kDa composed of LHFPL4, NLGN2, GABRA1, GABRB2, GABRG2 and GABRB3. Interacts with LHFPL4. Interacts with NLGN2. Interacts with SHISA7; interaction leads to the regulation of GABA(A) receptor trafficking, channel deactivation kinetics and pharmacology. In terms of tissue distribution, cerebellar granule cells, Purkinje cells and stellate/basket cells.

It localises to the postsynaptic cell membrane. The protein localises to the cell membrane. Its subcellular location is the cytoplasmic vesicle membrane. It catalyses the reaction chloride(in) = chloride(out). With respect to regulation, allosterically activated by benzodiazepines, the neuroanesthetic alphaxalone and pentobarbital. Inhibited by the antagonist bicuculline. Potentiated by histamine. In terms of biological role, alpha subunit of the heteropentameric ligand-gated chloride channel gated by gamma-aminobutyric acid (GABA), a major inhibitory neurotransmitter in the brain. GABA-gated chloride channels, also named GABA(A) receptors (GABAAR), consist of five subunits arranged around a central pore and contain GABA active binding site(s) located at the alpha and beta subunit interface(s). When activated by GABA, GABAARs selectively allow the flow of chloride anions across the cell membrane down their electrochemical gradient. Alpha-1/GABRA1-containing GABAARs are largely synaptic. Chloride influx into the postsynaptic neuron following GABAAR opening decreases the neuron ability to generate a new action potential, thereby reducing nerve transmission. GABAARs containing alpha-1 and beta-2 or -3 subunits exhibit synaptogenic activity; the gamma-2 subunit being necessary but not sufficient to induce rapid synaptic contacts formation. GABAARs function also as histamine receptor where histamine binds at the interface of two neighboring beta subunits and potentiates GABA response. GABAARs containing alpha, beta and epsilon subunits also permit spontaneous chloride channel activity while preserving the structural information required for GABA-gated openings. Alpha-1-mediated plasticity in the orbitofrontal cortex regulates context-dependent action selection. Together with rho subunits, may also control neuronal and glial GABAergic transmission in the cerebellum. This Bos taurus (Bovine) protein is Gamma-aminobutyric acid receptor subunit alpha-1 (GABRA1).